A 330-amino-acid chain; its full sequence is 4-hydroxythreonine-4-phosphate dehydrogenase (330 aa).

Substrate is bound at residue Thr133. Residues His161, His206, and His261 each contribute to the a divalent metal cation site. Substrate is bound by residues Lys269, Asn278, and Arg287.

This sequence belongs to the PdxA family. As to quaternary structure, homodimer. The cofactor is Zn(2+). It depends on Mg(2+) as a cofactor. Co(2+) is required as a cofactor.

The protein resides in the cytoplasm. It carries out the reaction 4-(phosphooxy)-L-threonine + NAD(+) = 3-amino-2-oxopropyl phosphate + CO2 + NADH. Its pathway is cofactor biosynthesis; pyridoxine 5'-phosphate biosynthesis; pyridoxine 5'-phosphate from D-erythrose 4-phosphate: step 4/5. Functionally, catalyzes the NAD(P)-dependent oxidation of 4-(phosphooxy)-L-threonine (HTP) into 2-amino-3-oxo-4-(phosphooxy)butyric acid which spontaneously decarboxylates to form 3-amino-2-oxopropyl phosphate (AHAP). This Xylella fastidiosa (strain Temecula1 / ATCC 700964) protein is 4-hydroxythreonine-4-phosphate dehydrogenase.